Here is an 81-residue protein sequence, read N- to C-terminus: Photosystem I iron-sulfur center (81 aa).

4Fe-4S ferredoxin-type domains follow at residues 2-31 and 39-68; these read SHAV…MVPW and IASS…IRVY. 8 residues coordinate [4Fe-4S] cluster: Cys-11, Cys-14, Cys-17, Cys-21, Cys-48, Cys-51, Cys-54, and Cys-58.

The cyanobacterial PSI reaction center is composed of one copy each of PsaA,B,C,D,E,F,I,J,K,L,M and X, and forms trimeric complexes. The cofactor is [4Fe-4S] cluster.

Its subcellular location is the cellular thylakoid membrane. The catalysed reaction is reduced [plastocyanin] + hnu + oxidized [2Fe-2S]-[ferredoxin] = oxidized [plastocyanin] + reduced [2Fe-2S]-[ferredoxin]. Apoprotein for the two 4Fe-4S centers FA and FB of photosystem I (PSI); essential for photochemical activity. FB is the terminal electron acceptor of PSI, donating electrons to ferredoxin. The C-terminus interacts with PsaA/B/D and helps assemble the protein into the PSI complex. Required for binding of PsaD and PsaE to PSI. PSI is a plastocyanin/cytochrome c6-ferredoxin oxidoreductase, converting photonic excitation into a charge separation, which transfers an electron from the donor P700 chlorophyll pair to the spectroscopically characterized acceptors A0, A1, FX, FA and FB in turn. In Prochlorococcus marinus (strain MIT 9211), this protein is Photosystem I iron-sulfur center.